The chain runs to 396 residues: Chalcone synthase (396 aa).

Residue C167 is part of the active site.

This sequence belongs to the thiolase-like superfamily. Chalcone/stilbene synthases family.

The enzyme catalyses (E)-4-coumaroyl-CoA + 3 malonyl-CoA + 3 H(+) = 2',4,4',6'-tetrahydroxychalcone + 3 CO2 + 4 CoA. The protein operates within secondary metabolite biosynthesis; flavonoid biosynthesis. The primary product of this enzyme is 4,2',4',6'-tetrahydroxychalcone (also termed naringenin-chalcone or chalcone) which can under specific conditions spontaneously isomerize into naringenin. The sequence is that of Chalcone synthase (CHS) from Chrysosplenium americanum (American golden saxifrage).